Reading from the N-terminus, the 475-residue chain is Maintenance of mitochondrial morphology protein 1 (475 aa).

At 1-14 (MSETFSPNLTFTEG) the chain is on the lumenal side. Residues 15–35 (FVLGQASFLIILLLFIRYVVF) traverse the membrane as a helical segment. The Cytoplasmic portion of the chain corresponds to 36 to 475 (SPSEQIDHEG…VTPGQVGTSR (440 aa)). The 199-residue stretch at 80–278 (PAESSDWVNV…HPNHISLALP (199 aa)) folds into the SMP-LTD domain. 2 disordered regions span residues 321–381 (NPVE…GQPQ) and 394–475 (SYPH…GTSR). Pro residues predominate over residues 341-351 (PPTPLVQPPGT). Composition is skewed to polar residues over residues 353–380 (PTLSVSSRQSHRQSLPPSRPQSTTQGQP) and 394–403 (SYPHYNTYTL). Residues 442–464 (STTSSLTPSQSQSQFRFRGQFAS) show a composition bias toward low complexity.

It belongs to the MMM1 family. Homodimer. Component of the ER-mitochondria encounter structure (ERMES) or MDM complex, composed of MMM1, MDM10, MDM12 and MDM34. An MMM1 homodimer associates with one molecule of MDM12 on each side in a pairwise head-to-tail manner, and the SMP-LTD domains of MMM1 and MDM12 generate a continuous hydrophobic tunnel for phospholipid trafficking.

It localises to the endoplasmic reticulum membrane. Functionally, component of the ERMES/MDM complex, which serves as a molecular tether to connect the endoplasmic reticulum (ER) and mitochondria. Components of this complex are involved in the control of mitochondrial shape and protein biogenesis, and function in nonvesicular lipid trafficking between the ER and mitochondria. The MDM12-MMM1 subcomplex functions in the major beta-barrel assembly pathway that is responsible for biogenesis of all outer membrane beta-barrel proteins, and acts in a late step after the SAM complex. The MDM10-MDM12-MMM1 subcomplex further acts in the TOM40-specific pathway after the action of the MDM12-MMM1 complex. Essential for establishing and maintaining the structure of mitochondria and maintenance of mtDNA nucleoids. This Cryptococcus neoformans var. neoformans serotype D (strain B-3501A) (Filobasidiella neoformans) protein is Maintenance of mitochondrial morphology protein 1.